The primary structure comprises 164 residues: SsrA-binding protein (164 aa).

The interval 141–164 is disordered; it reads KLHDKRQDEKQKSIKKEINSALKR. Basic and acidic residues predominate over residues 145–158; sequence KRQDEKQKSIKKEI.

This sequence belongs to the SmpB family.

Its subcellular location is the cytoplasm. In terms of biological role, required for rescue of stalled ribosomes mediated by trans-translation. Binds to transfer-messenger RNA (tmRNA), required for stable association of tmRNA with ribosomes. tmRNA and SmpB together mimic tRNA shape, replacing the anticodon stem-loop with SmpB. tmRNA is encoded by the ssrA gene; the 2 termini fold to resemble tRNA(Ala) and it encodes a 'tag peptide', a short internal open reading frame. During trans-translation Ala-aminoacylated tmRNA acts like a tRNA, entering the A-site of stalled ribosomes, displacing the stalled mRNA. The ribosome then switches to translate the ORF on the tmRNA; the nascent peptide is terminated with the 'tag peptide' encoded by the tmRNA and targeted for degradation. The ribosome is freed to recommence translation, which seems to be the essential function of trans-translation. The polypeptide is SsrA-binding protein (Prochlorococcus marinus (strain AS9601)).